The sequence spans 208 residues: Imidazoleglycerol-phosphate dehydratase (208 aa).

This sequence belongs to the imidazoleglycerol-phosphate dehydratase family.

The protein resides in the cytoplasm. The enzyme catalyses D-erythro-1-(imidazol-4-yl)glycerol 3-phosphate = 3-(imidazol-4-yl)-2-oxopropyl phosphate + H2O. Its pathway is amino-acid biosynthesis; L-histidine biosynthesis; L-histidine from 5-phospho-alpha-D-ribose 1-diphosphate: step 6/9. This chain is Imidazoleglycerol-phosphate dehydratase, found in Prochlorococcus marinus (strain MIT 9211).